Reading from the N-terminus, the 469-residue chain is 3-isopropylmalate dehydratase large subunit (469 aa).

Positions 349, 410, and 413 each coordinate [4Fe-4S] cluster.

The protein belongs to the aconitase/IPM isomerase family. LeuC type 1 subfamily. Heterodimer of LeuC and LeuD. It depends on [4Fe-4S] cluster as a cofactor.

It catalyses the reaction (2R,3S)-3-isopropylmalate = (2S)-2-isopropylmalate. It functions in the pathway amino-acid biosynthesis; L-leucine biosynthesis; L-leucine from 3-methyl-2-oxobutanoate: step 2/4. Catalyzes the isomerization between 2-isopropylmalate and 3-isopropylmalate, via the formation of 2-isopropylmaleate. This Neisseria meningitidis serogroup B (strain ATCC BAA-335 / MC58) protein is 3-isopropylmalate dehydratase large subunit.